We begin with the raw amino-acid sequence, 496 residues long: NADP-dependent glyceraldehyde-3-phosphate dehydrogenase (496 aa).

Substrate contacts are provided by residues Arg-116 and 169–170; that span reads NY. Residues Lys-192, Thr-195, and Asp-230 each contribute to the NADP(+) site. 245 to 249 is an NAD(+) binding site; sequence GGDTG. The active-site Proton acceptor is the Glu-264. A substrate-binding site is contributed by 297-299; the sequence is RCT. Cys-298 serves as the catalytic Nucleophile. An NADP(+)-binding site is contributed by Glu-391. Arg-451 is a substrate binding site.

This sequence belongs to the aldehyde dehydrogenase family.

The protein localises to the cytoplasm. The enzyme catalyses D-glyceraldehyde 3-phosphate + NADP(+) + H2O = (2R)-3-phosphoglycerate + NADPH + 2 H(+). Functionally, important as a means of generating NADPH for biosynthetic reactions. The polypeptide is NADP-dependent glyceraldehyde-3-phosphate dehydrogenase (GAPN) (Pisum sativum (Garden pea)).